The primary structure comprises 710 residues: Solute carrier organic anion transporter family member 3A1 (710 aa).

Met1 is modified (N-acetylmethionine). Over residues 1-15 (MQGKKPGGSSGGGRS) the composition is skewed to gly residues. The tract at residues 1 to 25 (MQGKKPGGSSGGGRSGELQGDEAQR) is disordered. Topologically, residues 1-40 (MQGKKPGGSSGGGRSGELQGDEAQRNKKKKKKVSCFSNIK) are cytoplasmic. A helical transmembrane segment spans residues 41-60 (IFLVSECALMLAQGTVGAYL). The Extracellular segment spans residues 61–79 (VSVLTTLERRFNLQSADVG). The chain crosses the membrane as a helical span at residues 80-100 (VIASSFEIGNLALILFVSYFG). The Cytoplasmic portion of the chain corresponds to 101–106 (ARGHRP). The helical transmembrane segment at 107-131 (RLIGCGGIVMALGALLSALPEFLTH) threads the bilayer. Topologically, residues 132-174 (QYKYEAGEIRWGAEGRDVCATNGSSSDEGPDPDLICRNRTATN) are extracellular. 2 N-linked (GlcNAc...) asparagine glycosylation sites follow: Asn153 and Asn169. Residues 175 to 203 (MMYLLLIGAQVLLGIGATPVQPLGVSYID) traverse the membrane as a helical segment. Topologically, residues 204–222 (DHVRRKDSSLYIGILFTML) are cytoplasmic. A helical membrane pass occupies residues 223–243 (VFGPACGFILGSFCTKIYVDA). The Extracellular portion of the chain corresponds to 244 to 261 (VFIDTSNLDITPDDPRWI). A helical transmembrane segment spans residues 262–286 (GAWWGGFLLCGALLFFSSLLMFGFP). The Cytoplasmic segment spans residues 287–344 (QSLPPHSDPGMESEQAMLPEREYERPKPSNGVLRHPLEPDSSASCFQQLRVIPKVTKH). A helical membrane pass occupies residues 345 to 366 (LLSNPVFTCIVLAACMEIAVVA). At 367-386 (GFAAFLGKYLEQQFNLTTSS) the chain is on the extracellular side. N-linked (GlcNAc...) asparagine glycosylation is present at Asn381. The helical transmembrane segment at 387-410 (ANQLLGMTAIPCACLGIFLGGLLV) threads the bilayer. Residues 411–414 (KKLS) lie on the Cytoplasmic side of the membrane. A helical transmembrane segment spans residues 415–438 (LSALGAIRMAMLVNLVSTACYVSF). Residues 439–539 (LFLGCDTGPV…PGCQEAFLTF (101 aa)) are Extracellular-facing. N-linked (GlcNAc...) asparagine glycosylation occurs at Asn457. Residues 465 to 513 (LDPYSPCNNNCECQTDSFTPVCGADGITYLSACFAGCNSTNLTGCACLT) enclose the Kazal-like domain. Disulfide bonds link Cys471–Cys497, Cys475–Cys486, and Cys477–Cys501. 3 N-linked (GlcNAc...) asparagine glycosylation sites follow: Asn502, Asn505, and Asn519. Residues 540–562 (LCVMCVCSLIGAMAQTPSVIILI) traverse the membrane as a helical segment. Topologically, residues 563–571 (RTVSPELKS) are cytoplasmic. The chain crosses the membrane as a helical span at residues 572–597 (YALGVLFLLLRLLGFIPPPLIFGAGI). Residues 598–630 (DSTCLFWSTFCGEQGACVLYDNVVYRYLYVSIA) lie on the Extracellular side of the membrane. The chain crosses the membrane as a helical span at residues 631-648 (IALKSFAFILYTTTWQCL). Residues 649 to 705 (RKNYKRYIKNHEGGLSTSEFFASTLTLDNLGRDPVPAHQTHRTKFIYNLEDHEWCEN) lie on the Cytoplasmic side of the membrane.

The protein belongs to the organo anion transporter (TC 2.A.60) family. Widely expressed.

Its subcellular location is the basolateral cell membrane. It localises to the apical cell membrane. The protein localises to the basal cell membrane. The catalysed reaction is L-thyroxine(out) = L-thyroxine(in). It carries out the reaction prostaglandin E1(out) = prostaglandin E1(in). It catalyses the reaction prostaglandin E2(out) = prostaglandin E2(in). The enzyme catalyses prostaglandin F2alpha(out) = prostaglandin F2alpha(in). The catalysed reaction is (5Z,8Z,11Z,14Z)-eicosatetraenoate(out) = (5Z,8Z,11Z,14Z)-eicosatetraenoate(in). It carries out the reaction taurocholate(out) = taurocholate(in). It catalyses the reaction glycocholate(out) = glycocholate(in). The enzyme catalyses estrone 3-sulfate(out) = estrone 3-sulfate(in). The catalysed reaction is argipressin(out) = argipressin(in). In terms of biological role, putative organic anion antiporter with apparent broad substrate specificity. Recognizes various substrates including thyroid hormone L-thyroxine, prostanoids such as prostaglandin E1 and E2, bile acids such as taurocholate, glycolate and glycochenodeoxycholate and peptide hormones such as L-arginine vasopressin, likely operating in a tissue-specific manner. The transport mechanism, its electrogenicity and potential tissue-specific counterions remain to be elucidated. In Mus musculus (Mouse), this protein is Solute carrier organic anion transporter family member 3A1 (Slco3a1).